A 137-amino-acid chain; its full sequence is Large-conductance mechanosensitive channel (137 aa).

Transmembrane regions (helical) follow at residues 15–35, 38–58, and 80–100; these read IDLAIGVIIGGAFGGLVNSIV, IFMPIIGLITGGIDFSNMFIQ, and GNFITLLINFLIIAWVLFLFV.

The protein belongs to the MscL family. As to quaternary structure, homopentamer.

It localises to the cell inner membrane. Channel that opens in response to stretch forces in the membrane lipid bilayer. May participate in the regulation of osmotic pressure changes within the cell. This Bartonella henselae (strain ATCC 49882 / DSM 28221 / CCUG 30454 / Houston 1) (Rochalimaea henselae) protein is Large-conductance mechanosensitive channel.